The following is a 541-amino-acid chain: Protein wntless homolog (541 aa).

Over 1 to 15 (MAGAIIENMSTKKLC) the chain is Cytoplasmic. A helical transmembrane segment spans residues 16-36 (IVGGILLVFQIIAFLVGGLIA). The Lumenal portion of the chain corresponds to 37-232 (PGPTTAVSYM…GIHQNGGFTK (196 aa)). The tract at residues 101–232 (MEMSPWFQFM…GIHQNGGFTK (132 aa)) is interaction with Wnt proteins. A helical transmembrane segment spans residues 233-253 (VWFAMKTFLTPSIFIIMVWYW). Topologically, residues 254 to 268 (RRITMMSRPPVLLEK) are cytoplasmic. The chain crosses the membrane as a helical span at residues 269–289 (VIFALGISMTFINIPVEWFSI). Residues 290 to 303 (GFDWTWMLLFGDIR) lie on the Lumenal side of the membrane. Residues 304-324 (QGIFYAMLLSFWIIFCGEHMM) form a helical membrane-spanning segment. Residues 325–331 (DQHERNH) lie on the Cytoplasmic side of the membrane. Residues 332–352 (IAGYWKQVGPIAVGSFCLFIF) form a helical membrane-spanning segment. At 353 to 380 (DMCERGVQLTNPFYSIWTTDIGTELAMA) the chain is on the lumenal side. A helical membrane pass occupies residues 381-401 (FIIVAGICLCLYFLFLCFMVF). At 402-431 (QVFRNISGKQSSLPAMSKVRRLHYEGLIFR) the chain is on the cytoplasmic side. Residues 432–452 (FKFLMLITLACAAMTVIFFIV) traverse the membrane as a helical segment. Over 453–471 (SQVTEGHWKWGGVTVQVNS) the chain is Lumenal. Residues 472-492 (AFFTGIYGMWNLYVFALMFLY) traverse the membrane as a helical segment. Topologically, residues 493–541 (APSHKNYGEDQSNGDLGVHSGEELQLTTTITHVDGPTEIYKLTRKEAQE) are cytoplasmic.

It belongs to the wntless family. As to quaternary structure, interacts with WNT3A. Interacts with WNT1, WNT3 and WNT5A. In terms of processing, N-glycosylated.

The protein resides in the golgi apparatus membrane. Its subcellular location is the cytoplasmic vesicle membrane. The protein localises to the cell membrane. It localises to the endoplasmic reticulum membrane. It is found in the early endosome membrane. In terms of biological role, regulates Wnt proteins sorting and secretion in a feedback regulatory mechanism. This reciprocal interaction plays a key role in the regulation of expression, subcellular location, binding and organelle-specific association of Wnt proteins. Plays also an important role in establishment of the anterior-posterior body axis formation during development. This Homo sapiens (Human) protein is Protein wntless homolog (WLS).